The primary structure comprises 409 residues: Putative kinase Y4dM (409 aa).

Catalysis depends on aspartate 293, which acts as the Proton acceptor.

The protein belongs to the HipA Ser/Thr kinase family.

This is Putative kinase Y4dM from Sinorhizobium fredii (strain NBRC 101917 / NGR234).